Reading from the N-terminus, the 429-residue chain is MSGKQVVILLGSVLILGCLQVAAATETDNKTNDFVATDEWQTIAEGQAIPRGLHVRINLQTGLKEAKLLDESERGTSLQSQPDDQNARESHDDNEPLALDYKPDIIEESIRRVKEQKKSYAELRKAYKEFQKNFRTDGELIVQLIDQFRNFSRTPLESEMRSKLDCLENLEYLLHQIDNALMFIDNGGLDDVLLPIVVNDTSTSLRVSAMRVLGSLASNNPKAQIKVFEKNFGSHLAQILTSSGNVGEISAALHAFGALLRKFPLAQQRVLSTSGTQALIKVLQSPDVELRSKAKVVTLISDLVLEKRSVLDVSKDDPEASSTMAQYVLLDFESWLKTPGYCAAVDTVLTKEFLLLLEQPEVVEQFATALETTEDMCTSTWSQSSGLRHALLTVRNRYANSTDEYRLEVSQILAKLCERLFNKPKHTEL.

The first 24 residues, 1 to 24 (MSGKQVVILLGSVLILGCLQVAAA), serve as a signal peptide directing secretion. N-linked (GlcNAc...) asparagine glycosylation is present at asparagine 29. The tract at residues 70-98 (DESERGTSLQSQPDDQNARESHDDNEPLA) is disordered. The span at 75–84 (GTSLQSQPDD) shows a compositional bias: polar residues. Over residues 85-94 (QNARESHDDN) the composition is skewed to basic and acidic residues. The stretch at 104 to 135 (DIIEESIRRVKEQKKSYAELRKAYKEFQKNFR) forms a coiled coil. N-linked (GlcNAc...) asparagine glycans are attached at residues asparagine 150, asparagine 199, and asparagine 400. The Prevents secretion from ER motif lies at 426–429 (HTEL).

It belongs to the SIL1 family.

The protein resides in the endoplasmic reticulum lumen. Functionally, required for protein translocation and folding in the endoplasmic reticulum (ER). Functions as a nucleotide exchange factor for an ER lumenal chaperone of HSP70 family. The polypeptide is Nucleotide exchange factor Sil1 (Drosophila melanogaster (Fruit fly)).